The sequence spans 192 residues: Adenylate kinase (192 aa).

Residue Gly-10–Thr-15 participates in ATP binding. The segment at Ser-30–Val-59 is NMP. Residues Thr-31, Arg-36, Thr-57–Val-59, Gly-85–Arg-88, and Gln-92 each bind AMP. The segment at Lys-126 to Asp-142 is LID. Position 127 (Arg-127) interacts with ATP. Positions 139 and 150 each coordinate AMP. Ile-178 provides a ligand contact to ATP.

This sequence belongs to the adenylate kinase family. Monomer.

It localises to the cytoplasm. It catalyses the reaction AMP + ATP = 2 ADP. It functions in the pathway purine metabolism; AMP biosynthesis via salvage pathway; AMP from ADP: step 1/1. Its function is as follows. Catalyzes the reversible transfer of the terminal phosphate group between ATP and AMP. Plays an important role in cellular energy homeostasis and in adenine nucleotide metabolism. In Bartonella henselae (strain ATCC 49882 / DSM 28221 / CCUG 30454 / Houston 1) (Rochalimaea henselae), this protein is Adenylate kinase.